The following is a 582-amino-acid chain: MANQIDESKPISDLEIMRHSAAHIMAEAVLSMFPEAKLGIGPAIDTGFYYDFDLPRTLTPEDLPEIETRMNQLVKSNLPFRREEMSKDEARKLFANQPYKLELLNDITDETVSIYRQGNFCDLCRGPHVNYTSKVKAFKLLSIAGAYWRGDEKRPMLQRIYGAAFLDKASLAEYLNMLEEAAKRDHRKLGKELELFSLHQEIGGGLVNWLPNGAIVRHLIEEFWKKEHLKRGYDLVYTPHIAKVDLWKTSGHWGFYRENMYSPMDIDGEEYVLKPMNCVYHILMFKNRTRSYKELPIRMAELGTVYRYERSGVLHGLSRVRGFTQDDAHIFCLYDQLEKEVVKVLDLAKFMIDTFGFTKYKVMLSTRPEKYVGELDKWEYATDILAKALEANQIPYQVDPGEGVFYGPKIDIKFEDALGRAWQGPTIQVDFQLPERFDVSVVGEDGKDQPVAMVHRTVLGSMERFMSCLTEQYGGAFPAWLSPKQAMVIPIADRHTEFAEKLACELREEEVRVEVDSRSETMNQKIRQAQLAKIPYMLVVGDKEIETQSVAVRTRTGSQQVMPFAEFKSMLLAKIKTKSTEI.

Positions 185-478 (DHRKLGKELE…LTEQYGGAFP (294 aa)) are catalytic. 3 residues coordinate Zn(2+): C278, H329, and H455.

It belongs to the class-II aminoacyl-tRNA synthetase family. In terms of assembly, homodimer. It depends on Zn(2+) as a cofactor.

The protein resides in the cytoplasm. It catalyses the reaction tRNA(Thr) + L-threonine + ATP = L-threonyl-tRNA(Thr) + AMP + diphosphate + H(+). Functionally, catalyzes the attachment of threonine to tRNA(Thr) in a two-step reaction: L-threonine is first activated by ATP to form Thr-AMP and then transferred to the acceptor end of tRNA(Thr). Also edits incorrectly charged L-seryl-tRNA(Thr). In Dehalococcoides mccartyi (strain ATCC BAA-2100 / JCM 16839 / KCTC 5957 / BAV1), this protein is Threonine--tRNA ligase.